Reading from the N-terminus, the 98-residue chain is UPF0213 protein in ldhD 5'region (98 aa).

The region spanning 7-84 (NGFYFYVLWC…KKQSRKEKLK (78 aa)) is the GIY-YIG domain.

Belongs to the UPF0213 family.

The protein is UPF0213 protein in ldhD 5'region of Pediococcus acidilactici.